We begin with the raw amino-acid sequence, 511 residues long: ATP synthase subunit alpha (511 aa).

169 to 176 (GDRQTGKT) serves as a coordination point for ATP.

It belongs to the ATPase alpha/beta chains family. F-type ATPases have 2 components, CF(1) - the catalytic core - and CF(0) - the membrane proton channel. CF(1) has five subunits: alpha(3), beta(3), gamma(1), delta(1), epsilon(1). CF(0) has three main subunits: a(1), b(2) and c(9-12). The alpha and beta chains form an alternating ring which encloses part of the gamma chain. CF(1) is attached to CF(0) by a central stalk formed by the gamma and epsilon chains, while a peripheral stalk is formed by the delta and b chains.

It is found in the cell inner membrane. It catalyses the reaction ATP + H2O + 4 H(+)(in) = ADP + phosphate + 5 H(+)(out). In terms of biological role, produces ATP from ADP in the presence of a proton gradient across the membrane. The alpha chain is a regulatory subunit. This Bartonella henselae (strain ATCC 49882 / DSM 28221 / CCUG 30454 / Houston 1) (Rochalimaea henselae) protein is ATP synthase subunit alpha.